Reading from the N-terminus, the 725-residue chain is Ribosomal RNA large subunit methyltransferase K/L (725 aa).

A THUMP domain is found at 45-156 (SGYRACLWSR…RGRLSLGIDL (112 aa)).

The protein belongs to the methyltransferase superfamily. RlmKL family.

The protein localises to the cytoplasm. The catalysed reaction is guanosine(2445) in 23S rRNA + S-adenosyl-L-methionine = N(2)-methylguanosine(2445) in 23S rRNA + S-adenosyl-L-homocysteine + H(+). It carries out the reaction guanosine(2069) in 23S rRNA + S-adenosyl-L-methionine = N(2)-methylguanosine(2069) in 23S rRNA + S-adenosyl-L-homocysteine + H(+). Specifically methylates the guanine in position 2445 (m2G2445) and the guanine in position 2069 (m7G2069) of 23S rRNA. The protein is Ribosomal RNA large subunit methyltransferase K/L of Marinobacter nauticus (strain ATCC 700491 / DSM 11845 / VT8) (Marinobacter aquaeolei).